We begin with the raw amino-acid sequence, 621 residues long: Uptake hydrogenase large subunit (621 aa).

4 residues coordinate Ni(2+): Cys75, Cys78, Cys600, and Cys603.

It belongs to the [NiFe]/[NiFeSe] hydrogenase large subunit family. Heterodimer of a large and a small subunit. Ni(2+) is required as a cofactor.

Its subcellular location is the cell membrane. It carries out the reaction H2 + A = AH2. In terms of biological role, this enzyme recycles the H(2) produced by nitrogenase to increase the production of ATP and to protect nitrogenase against inhibition or damage by O(2) under carbon- or phosphate-limited conditions. The sequence is that of Uptake hydrogenase large subunit (hupL) from Alcaligenes hydrogenophilus.